A 61-amino-acid polypeptide reads, in one-letter code: Large ribosomal subunit protein uL30 (61 aa).

This sequence belongs to the universal ribosomal protein uL30 family. In terms of assembly, part of the 50S ribosomal subunit.

This is Large ribosomal subunit protein uL30 from Legionella pneumophila (strain Paris).